Reading from the N-terminus, the 110-residue chain is UPF0213 protein DP2720 (110 aa).

In terms of domain architecture, GIY-YIG spans 12–88 (PAWFVYIVQC…KQLSPTRKRT (77 aa)).

The protein belongs to the UPF0213 family.

This chain is UPF0213 protein DP2720, found in Desulfotalea psychrophila (strain LSv54 / DSM 12343).